The primary structure comprises 134 residues: Small ribosomal subunit protein uS8c (134 aa).

It belongs to the universal ribosomal protein uS8 family. As to quaternary structure, part of the 30S ribosomal subunit.

It is found in the plastid. The protein localises to the chloroplast. Its function is as follows. One of the primary rRNA binding proteins, it binds directly to 16S rRNA central domain where it helps coordinate assembly of the platform of the 30S subunit. This chain is Small ribosomal subunit protein uS8c (rps8), found in Vitis vinifera (Grape).